We begin with the raw amino-acid sequence, 277 residues long: Shikimate dehydrogenase (NADP(+)) (277 aa).

Residues 15 to 17 (SLS) and T62 each bind shikimate. K66 functions as the Proton acceptor in the catalytic mechanism. Shikimate contacts are provided by N87 and D102. Residues 127–131 (GAGGA), 151–156 (NRTVDK), and I219 contribute to the NADP(+) site. Y221 contacts shikimate. Position 242 (G242) interacts with NADP(+).

This sequence belongs to the shikimate dehydrogenase family. Homodimer.

It catalyses the reaction shikimate + NADP(+) = 3-dehydroshikimate + NADPH + H(+). It functions in the pathway metabolic intermediate biosynthesis; chorismate biosynthesis; chorismate from D-erythrose 4-phosphate and phosphoenolpyruvate: step 4/7. Involved in the biosynthesis of the chorismate, which leads to the biosynthesis of aromatic amino acids. Catalyzes the reversible NADPH linked reduction of 3-dehydroshikimate (DHSA) to yield shikimate (SA). The sequence is that of Shikimate dehydrogenase (NADP(+)) from Bacillus anthracis (strain CDC 684 / NRRL 3495).